The following is a 195-amino-acid chain: Nicotinamide riboside kinase 1 (195 aa).

10–18 (GVTNGGKTT) contributes to the ATP binding site. Mg(2+) is bound by residues threonine 17 and aspartate 36. Aspartate 36 functions as the Proton acceptor in the catalytic mechanism. Substrate is bound by residues 36–39 (DDFF) and 55–56 (YD). ATP is bound at residue arginine 128. Substrate contacts are provided by residues arginine 129 and 134 to 135 (YE). ATP contacts are provided by residues 132–134 (RVY) and 172–174 (RSE).

Belongs to the uridine kinase family. NRK subfamily. As to quaternary structure, monomer.

The enzyme catalyses beta-nicotinamide D-riboside + ATP = beta-nicotinamide D-ribonucleotide + ADP + H(+). It catalyses the reaction beta-D-ribosylnicotinate + ATP = nicotinate beta-D-ribonucleotide + ADP + H(+). Its pathway is cofactor biosynthesis; NAD(+) biosynthesis. Catalyzes the phosphorylation of nicotinamide riboside (NR) and nicotinic acid riboside (NaR) to form nicotinamide mononucleotide (NMN) and nicotinic acid mononucleotide (NaMN). This Mus musculus (Mouse) protein is Nicotinamide riboside kinase 1 (Nmrk1).